A 701-amino-acid chain; its full sequence is Vacuolar protein sorting-associated protein 52 B (701 aa).

2 coiled-coil regions span residues 23 to 45 (FEED…EECE) and 511 to 533 (QLDI…LAKL).

The protein belongs to the VPS52 family. As to quaternary structure, component of the Golgi-associated retrograde protein (GARP) complex. In terms of tissue distribution, detected in pollen.

It localises to the golgi apparatus. It is found in the trans-Golgi network membrane. The protein localises to the endosome membrane. The protein resides in the golgi apparatus membrane. May be involved in retrograde transport of early and late endosomes to the late Golgi. This Arabidopsis thaliana (Mouse-ear cress) protein is Vacuolar protein sorting-associated protein 52 B (P2).